The following is a 119-amino-acid chain: Large ribosomal subunit protein bL20 (119 aa).

The protein belongs to the bacterial ribosomal protein bL20 family.

Its function is as follows. Binds directly to 23S ribosomal RNA and is necessary for the in vitro assembly process of the 50S ribosomal subunit. It is not involved in the protein synthesizing functions of that subunit. This Clostridium acetobutylicum (strain ATCC 824 / DSM 792 / JCM 1419 / IAM 19013 / LMG 5710 / NBRC 13948 / NRRL B-527 / VKM B-1787 / 2291 / W) protein is Large ribosomal subunit protein bL20.